The primary structure comprises 129 residues: Large ribosomal subunit protein bL12 (129 aa).

The protein belongs to the bacterial ribosomal protein bL12 family. In terms of assembly, homodimer. Part of the ribosomal stalk of the 50S ribosomal subunit. Forms a multimeric L10(L12)X complex, where L10 forms an elongated spine to which 2 to 4 L12 dimers bind in a sequential fashion. Binds GTP-bound translation factors.

Its function is as follows. Forms part of the ribosomal stalk which helps the ribosome interact with GTP-bound translation factors. Is thus essential for accurate translation. The chain is Large ribosomal subunit protein bL12 from Thermosipho melanesiensis (strain DSM 12029 / CIP 104789 / BI429).